We begin with the raw amino-acid sequence, 220 residues long: Ribonuclease HII (220 aa).

Positions 27-220 constitute an RNase H type-2 domain; it reads CIIVGVDEVG…SKISYMFKNS (194 aa). A divalent metal cation-binding residues include Asp-33, Glu-34, and Asp-128.

Belongs to the RNase HII family. Requires Mn(2+) as cofactor. It depends on Mg(2+) as a cofactor.

Its subcellular location is the cytoplasm. It catalyses the reaction Endonucleolytic cleavage to 5'-phosphomonoester.. In terms of biological role, endonuclease that specifically degrades the RNA of RNA-DNA hybrids. This chain is Ribonuclease HII, found in Ehrlichia ruminantium (strain Gardel).